A 617-amino-acid chain; its full sequence is Neurosecretory protein VGF (617 aa).

An N-terminal signal peptide occupies residues 1–23 (MKTFTLPASVLFCFLLLIRGLGA). Disordered stretches follow at residues 29–75 (SDVY…GELF), 94–113 (PASP…EEAA), 121–157 (VRSQ…DRSE), and 169–192 (LRDF…ETRT). The span at 48–64 (AVSRPKDDSVPEVRAAR) shows a compositional bias: basic and acidic residues. A compositionally biased stretch (acidic residues) spans 148–157 (NDPEADDRSE). At glutamine 180 the chain carries Pyrrolidone carboxylic acid. Low complexity predominate over residues 182–192 (ETAAAETETRT). The residue at position 313 (glutamine 313) is a Pyrrolidone carboxylic acid. The disordered stretch occupies residues 348 to 603 (DLGGRGLQET…AEERRLQEQE (256 aa)). The span at 378–397 (EDEVGEEDEEAAEAEAEAEE) shows a compositional bias: acidic residues. Residues 418–436 (AEDKRSQEEAPGHRRKDAE) show a composition bias toward basic and acidic residues. Serine 423 carries the phosphoserine modification. The segment covering 437 to 452 (GTEEGGEEDDDDEEMD) has biased composition (acidic residues). Pro residues predominate over residues 491–501 (PPEPVPPPRAA). A compositionally biased stretch (basic and acidic residues) spans 577–601 (HHPDLEAQARRAQEEADAEERRLQE).

As to quaternary structure, interacts with HSPA8 on cell membrane. Interacts with C3AR1. Interacts with C1QBP. Multiple peptides are derived from VGF, with activities in synaptic plasticity, antidepression, penile erection, autonomic activation, and increases in energy expenditure. As to expression, central and peripheral nervous systems, synthesized exclusively in neuronal and neuroendocrine cells. VGF and several of the derived peptides are present in the brain.

The protein resides in the secreted. Its subcellular location is the cytoplasmic vesicle. The protein localises to the secretory vesicle. In terms of biological role, secreted polyprotein that is packaged and proteolytically processed by prohormone convertases PCSK1 and PCSK2 in a cell-type-specific manner. VGF and peptides derived from its processing play many roles in neurogenesis and neuroplasticity associated with learning, memory, depression and chronic pain. Functionally, plays a role in the control of body fluid homeostasis by regulating vasopressin release. Suppresses presynaptic glutamatergic neurons connected to vasopressin neurons. Plays a role in the control of body fluid homeostasis by regulating vasopressin release. Activates GABAergic interneurons which are inhibitory neurons of the nervous system and thereby suppresses presynaptic glutamatergic neurons. Also stimulates feeding behavior in an orexin-dependent manner in the hypothalamus. Functions as a positive regulator for the activation of orexin neurons resulting in elevated gastric acid secretion and gastric emptying. Its function is as follows. Secreted multifunctional neuropeptide that binds to different cell receptors and thereby plays multiple physiological roles including modulation of energy expenditure, pain, response to stress, gastric regulation, glucose homeostasis as well as lipolysis. Activates the G-protein-coupled receptor C3AR1 via a folding-upon-binding mechanism leading to enhanced lipolysis in adipocytes. Interacts with C1QBP receptor in macrophages and microglia causing increased levels of intracellular calcium and hypersensitivity. In terms of biological role, plays a role in the regulation of memory formation and depression-related behaviors potentially by influencing synaptic plasticity and neurogenesis. Induces acute and transient activation of the NTRK2/TRKB receptor and subsequent CREB phosphorylation. Also induces insulin secretion in insulinoma cells by increasing intracellular calcium mobilization. The chain is Neurosecretory protein VGF (Vgf) from Rattus norvegicus (Rat).